Consider the following 111-residue polypeptide: MAKIQFSRGLDEEVIPEVRLTRSRTGDTGTATFIFTNPKILDQGTTEDITGMYLIDEEGEIITREVKGKFVNGRPEGVEAVYVMKSAQEWERFIRFMERYAQENDLGFSKS.

It belongs to the Psb28 family. Part of the photosystem II complex.

The protein resides in the cellular thylakoid membrane. This chain is Photosystem II reaction center Psb28 protein, found in Trichormus variabilis (strain ATCC 29413 / PCC 7937) (Anabaena variabilis).